Here is a 356-residue protein sequence, read N- to C-terminus: Tyrosine recombinase XerS (356 aa).

The Core-binding (CB) domain occupies 16–121; it reads IMPWYVLDYY…ALSSLYKYLT (106 aa). The Tyr recombinase domain occupies 169-354; it reads AFLDYVDKEY…VNDEQKNALD (186 aa). Residues Arg210, Lys234, His306, Arg309, and His332 contribute to the active site. The active-site O-(3'-phospho-DNA)-tyrosine intermediate is Tyr341.

Belongs to the 'phage' integrase family. XerS subfamily.

It localises to the cytoplasm. FtsK is required for recombination. Site-specific tyrosine recombinase, which acts by catalyzing the cutting and rejoining of the recombining DNA molecules. Essential to convert dimers of the bacterial chromosome into monomers to permit their segregation at cell division. This Streptococcus equi subsp. equi (strain 4047) protein is Tyrosine recombinase XerS.